The chain runs to 341 residues: Protein BIG GRAIN 1-like C (341 aa).

Disordered stretches follow at residues aspartate 28–leucine 61 and serine 76–aspartate 138. Residues asparagine 52–leucine 61 are compositionally biased toward basic and acidic residues. A compositionally biased stretch (low complexity) spans serine 76–serine 92. Over residues lysine 105–aspartate 138 the composition is skewed to basic and acidic residues.

The protein belongs to the BIG GRAIN 1 (BG1) plant protein family.

It is found in the cell membrane. Its function is as follows. Involved in auxin transport. Regulator of the auxin signaling pathway. In Arabidopsis thaliana (Mouse-ear cress), this protein is Protein BIG GRAIN 1-like C.